The following is a 185-amino-acid chain: Auxin-responsive protein IAA34 (185 aa).

Positions 63-67 (LGLSL) match the EAR-like (transcriptional repression) motif. The region spanning 92–180 (WGYVKVTMDG…ERLRITRRND (89 aa)) is the PB1 domain.

The protein belongs to the Aux/IAA family. Homodimers and heterodimers.

The protein resides in the nucleus. Its function is as follows. Aux/IAA proteins are short-lived transcriptional factors that function as repressors of early auxin response genes at low auxin concentrations. Repression is thought to result from the interaction with auxin response factors (ARFs), proteins that bind to the auxin-responsive promoter element (AuxRE). Formation of heterodimers with ARF proteins may alter their ability to modulate early auxin response genes expression. The polypeptide is Auxin-responsive protein IAA34 (IAA34) (Arabidopsis thaliana (Mouse-ear cress)).